The following is a 1221-amino-acid chain: X-linked retinitis pigmentosa GTPase regulator-interacting protein 1 (1221 aa).

Polar residues-rich tracts occupy residues 1 to 15 (MIPTSKGKNTKTQPP) and 88 to 97 (GGTAPSSTSV). 3 disordered regions span residues 1–22 (MIPTSKGKNTKTQPPLSRMTRD), 68–107 (AEAAADESSGSPLNGGGTESGGTAPSSTSVPRCPGSSCSS), and 119–196 (SLAS…PEKM). Composition is skewed to basic and acidic residues over residues 134-147 (HRAEKPKRESRDRL) and 155-168 (FKEHVTNEKARGEV). Residues 267-533 (LGAAHNALLS…EEQLKDVAYG (267 aa)) are a coiled coil. Residues 723-843 (QKDEPRSGTW…AQNKSIQGDF (121 aa)) enclose the C2 domain. The disordered stretch occupies residues 869–947 (PENFPKPEAQ…YSRRKHGRKT (79 aa)). Residues 903-914 (QMVSIDTPTEAG) show a composition bias toward polar residues. Residues 1027–1216 (SEAQTTDSDE…ALQAIYKEMT (190 aa)) form an interaction with RPGR region.

It belongs to the RPGRIP1 family. Forms homodimers and elongated homopolymers. Interacts with NPHP4. Interacts with NEK4. Interacts with RPGR. Interacts with SPATA7. Interacts with CEP290/NPHP6; mediating the association between RPGR and CEP290/NPHP6. Retina, brain, skeletal muscle and kidney. Colocalizes with RGPR in the outer segment of rod photoreceptors and cone outer segments.

The protein resides in the cell projection. Its subcellular location is the cilium. In terms of biological role, may function as scaffolding protein. Required for normal location of RPGR at the connecting cilium of photoreceptor cells. Required for normal disk morphogenesis and disk organization in the outer segment of photoreceptor cells and for survival of photoreceptor cells. In Bos taurus (Bovine), this protein is X-linked retinitis pigmentosa GTPase regulator-interacting protein 1 (RPGRIP1).